The sequence spans 341 residues: Cysteine-rich with EGF-like domain protein 2 (341 aa).

The first 24 residues, 1–24 (MLLSCSIFRLFCIILLLQLGSIYT), serve as a signal peptide directing secretion. One can recognise an EGF-like domain in the interval 136 to 178 (DCNTCIGGADRPCHGNGKCDGDGTRAGNGKCSCDEGYDGEFCL). 3 disulfides stabilise this stretch: Cys-140-Cys-154, Cys-148-Cys-166, and Cys-168-Cys-177. A glycan (N-linked (GlcNAc...) asparagine) is linked at Asn-190. FU repeat units lie at residues 193–248 (FFLC…DQYC) and 254–308 (SFSC…NQHC). In terms of domain architecture, EGF-like 2; calcium-binding; truncated spans 291-317 (DIDECTEDPASCSDNQHCLNTDGSFSC).

This sequence belongs to the CRELD family.

The protein localises to the secreted. The protein resides in the endoplasmic reticulum. Its function is as follows. Possible role in neuronal acetylcholine receptor transport. The protein is Cysteine-rich with EGF-like domain protein 2 (creld2) of Danio rerio (Zebrafish).